The sequence spans 745 residues: Elongation factor G, mitochondrial (745 aa).

A mitochondrion-targeting transit peptide spans 1–15 (MSLITRLLTASSPLR). Residues 40-317 (DKIRNIGISA…AVLEYLPNPG (278 aa)) enclose the tr-type G domain. GTP is bound by residues 49-56 (AHIDSGKT), 116-120 (DTPGH), and 170-173 (NKLD).

This sequence belongs to the TRAFAC class translation factor GTPase superfamily. Classic translation factor GTPase family. EF-G/EF-2 subfamily.

The protein localises to the mitochondrion. It participates in protein biosynthesis; polypeptide chain elongation. Mitochondrial GTPase that catalyzes the GTP-dependent ribosomal translocation step during translation elongation. During this step, the ribosome changes from the pre-translocational (PRE) to the post-translocational (POST) state as the newly formed A-site-bound peptidyl-tRNA and P-site-bound deacylated tRNA move to the P and E sites, respectively. Catalyzes the coordinated movement of the two tRNA molecules, the mRNA and conformational changes in the ribosome. Essential during development as it acts as a retrograde signal from mitochondria to the nucleus to slow down cell proliferation if mitochondrial energy output is low. The protein is Elongation factor G, mitochondrial (ico) of Drosophila ananassae (Fruit fly).